Here is a 316-residue protein sequence, read N- to C-terminus: tRNA methyltransferase 10 homolog B (316 aa).

A coiled-coil region spans residues E73–N97. A disordered region spans residues A77–P98. Residues T113–I310 enclose the SAM-dependent MTase TRM10-type domain.

Belongs to the class IV-like SAM-binding methyltransferase superfamily. TRM10 family.

It catalyses the reaction guanosine(9) in tRNA + S-adenosyl-L-methionine = N(1)-methylguanosine(9) in tRNA + S-adenosyl-L-homocysteine + H(+). S-adenosyl-L-methionine-dependent guanine N(1)-methyltransferase that catalyzes the formation of N(1)-methylguanine at position 9 (m1G9) in tRNAs. Probably not able to catalyze formation of N(1)-methyladenine at position 9 (m1A9) in tRNAs. The sequence is that of tRNA methyltransferase 10 homolog B (TRMT10B) from Homo sapiens (Human).